A 536-amino-acid chain; its full sequence is Caspase recruitment domain-containing protein 9 (536 aa).

Ser-2 bears the Phosphoserine mark. 3 residues coordinate Zn(2+): Asp-3, Cys-10, and His-73. The CARD domain occupies 6 to 98 (NDDECWSALE…QLYRKVTGKE (93 aa)). The segment at 99-116 (PARVFSMIIDASGESGLT) is linker. 2 coiled-coil regions span residues 117–277 (QLLM…HRNS) and 303–420 (SLRK…QLDM). A Glycyl lysine isopeptide (Lys-Gly) (interchain with G-Cter in ubiquitin) cross-link involves residue Lys-125. Position 231 is a phosphothreonine (Thr-231). Ser-277 carries the phosphoserine modification. Ser-424, Ser-425, Ser-431, Ser-451, Ser-461, Ser-483, and Ser-498 each carry phosphoserine. The tract at residues 425 to 451 (SDLEDSSPRNSQELSLPQDLEEDAQLS) is disordered. Residues 472–536 (KHLSQTHDTV…GSDNTDTEGS (65 aa)) are disordered. Residues 487-502 (PPEKERRRLKESFENY) are compositionally biased toward basic and acidic residues. Thr-531 and Thr-533 each carry phosphothreonine; by CK2.

In terms of assembly, monomer. Homodimer; homodimerization is mediated by the CARD domain which forms an extensive interaction with the adjacent linker and coiled-coil regions; leads to an autoinhibited state. Homomultimer; polymerizes following activation, forming a nucleating helical template that seeds BCL10-filament formation via a CARD-CARD interaction. Interacts (via CARD domain) with BCL10 (via CARD domain); interaction takes place following CARD9 activation and polymerization, leading to the formation of a filamentous CBM complex assembly. Component of a CBM complex (CARD9-BCL10, MALT1), composed of CARD9, BCL10 and MALT1. Interacts with RASGRF1. Interacts with NOD2 (via NACHT domain); interaction is direct. Interacts with RIPK2. Interacts with VHL; without leading to protein degradation. In terms of processing, phosphorylated at Thr-231 by PRKCD downstream of C-type lectin receptors activation: phosphorylation promotes interaction with BCL10, followed by activation of NF-kappa-B and MAP kinase p38 pathways. Phosphorylated at Thr-531 and Thr-533 by CK2 following interaction with VHL, leading to inhibit the ability to activate NF-kappa-B. Ubiquitinated at Lys-125 via 'Lys-27'-linked ubiquitin by TRIM62 downstream of C-type lectin receptors activation; leading to CARD9 activation, followed by activation of NF-kappa-B and MAP kinase p38 pathways. Deubiquitinated at Lys-125 by USP15, inhibiting CARD9.

Its subcellular location is the cytoplasm. Maintained in an autoinhibited state via homodimerization in which the CARD domain forms an extensive interaction with the adjacent linker and coiled-coil regions. Activation downstream of C-type lectin receptors, by phosphorylation by PRKCD and/or ubiquitination by TRIM62, triggers disruption of the CARD domain-coiled coil interface, CARD9 homooligomerization and BCL10 recruitment, followed by activation of NF-kappa-B and MAP kinase p38 pathways. Zinc-binding inhibits activation by stabilizing the CARD ground-state conformation and restricting its capacity to form BCL10-nucleating filaments. Functionally, adapter protein that plays a key role in innate immune response against fungi by forming signaling complexes downstream of C-type lectin receptors. CARD9-mediated signals are essential for antifungal immunity against a subset of fungi from the phylum Ascomycota. Transduces signals in myeloid cells downstream of C-type lectin receptors CLEC7A (dectin-1), CLEC6A (dectin-2) and CLEC4E (Mincle), which detect pathogen-associated molecular pattern metabolites (PAMPs), such as fungal carbohydrates, and trigger CARD9 activation. Upon activation, CARD9 homooligomerizes to form a nucleating helical template that recruits BCL10 via CARD-CARD interaction, thereby promoting polymerization of BCL10 and subsequent recruitment of MALT1: this leads to activation of NF-kappa-B and MAP kinase p38 (MAPK11, MAPK12, MAPK13 and/or MAPK14) pathways which stimulate expression of genes encoding pro-inflammatory cytokines and chemokines. CARD9 signaling in antigen-presenting cells links innate sensing of fungi to the activation of adaptive immunity and provides a cytokine milieu that induces the development and subsequent of interleukin 17-producing T helper (Th17) cells. Also involved in activation of myeloid cells via classical ITAM-associated receptors and TLR: required for TLR-mediated activation of MAPK, while it is not required for TLR-induced activation of NF-kappa-B. CARD9 can also be engaged independently of BCL10: forms a complex with RASGRF1 downstream of C-type lectin receptors, which recruits and activates HRAS, leading to ERK activation and the production of cytokines. Acts as an important regulator of the intestinal commensal fungi (mycobiota) component of the gut microbiota. Plays an essential role in antifungal immunity against dissemination of gut fungi: acts by promoting induction of antifungal IgG antibodies response in CX3CR1(+) macrophages to confer protection against disseminated C.albicans or C.auris infection. Also mediates immunity against other pathogens, such as certain bacteria, viruses and parasites; CARD9 signaling is however redundant with other innate immune responses. In response to L.monocytogenes infection, required for the production of inflammatory cytokines activated by intracellular peptidoglycan: acts by connecting NOD2 recognition of peptidoglycan to downstream activation of MAP kinases (MAPK) without activating NF-kappa-B. This is Caspase recruitment domain-containing protein 9 from Rattus norvegicus (Rat).